Consider the following 267-residue polypeptide: MKVSIFSNNGLSSQKVATALQKGLTAAGVPIDSLDPDVVVTVGGDGTLLSAFHHYNDRLDKVRFVGIHTGHLGFYTDWRDYEVQELIDSLAQDNGQSVSYPLLTIQVEYADGTHPDQALALNESTIKKVSGTMVADVYIKDELFESFRGDGLCISTPTGSTAYNKSVGGAVLNPRFNAVQMAEIASINNLVFRTLGSPLIIPADEWIRIEPADPTDNVLMCDQLGIEGRPIKAIMYRIARQRIAFAEYRHTHFWQRVESSFIGRENA.

Aspartate 45 (proton acceptor) is an active-site residue. NAD(+)-binding positions include aspartate 45–glycine 46, asparagine 122–glutamate 123, arginine 148, aspartate 150, threonine 161–serine 166, alanine 185, and glutamine 223.

The protein belongs to the NAD kinase family. It depends on a divalent metal cation as a cofactor.

It localises to the cytoplasm. The catalysed reaction is NAD(+) + ATP = ADP + NADP(+) + H(+). Involved in the regulation of the intracellular balance of NAD and NADP, and is a key enzyme in the biosynthesis of NADP. Catalyzes specifically the phosphorylation on 2'-hydroxyl of the adenosine moiety of NAD to yield NADP. In Levilactobacillus brevis (strain ATCC 367 / BCRC 12310 / CIP 105137 / JCM 1170 / LMG 11437 / NCIMB 947 / NCTC 947) (Lactobacillus brevis), this protein is NAD kinase.